Consider the following 162-residue polypeptide: MRILKPYLRSTSIQCYLCLLLNSHFLTEAGIHVFILGCISAGLPKTEANWQYVINDLKTIEHLIQSIHMDATLYTEGDAHPNCKVTAMQCFLLELRVILHESKNAAIYEIIENLTMLANSNLSSIENKTELGCKECEELEEKSIKEFLKSFVHIVKMFINTS.

A signal peptide spans 1–29 (MRILKPYLRSTSIQCYLCLLLNSHFLTEA). Positions 30–48 (GIHVFILGCISAGLPKTEA) are excised as a propeptide. Cystine bridges form between Cys-83–Cys-133 and Cys-90–Cys-136. Residues Asn-113, Asn-121, and Asn-127 are each glycosylated (N-linked (GlcNAc...) asparagine).

The protein belongs to the IL-15/IL-21 family.

The protein localises to the secreted. Cytokine that plays a major role in the development of inflammatory and protective immune responses to microbial invaders and parasites by modulating immune cells of both the innate and adaptive immune systems. Stimulates the proliferation of natural killer cells, T-cells and B-cells and promotes the secretion of several cytokines. In monocytes, induces the production of IL8 and monocyte chemotactic protein 1/CCL2, two chemokines that attract neutrophils and monocytes respectively to sites of infection. Unlike most cytokines, which are secreted in soluble form, IL15 is expressed in association with its high affinity IL15RA on the surface of IL15-producing cells and delivers signals to target cells that express IL2RB and IL2RG receptor subunits. Binding to its receptor triggers the phosphorylation of JAK1 and JAK3 and the recruitment and subsequent phosphorylation of signal transducer and activator of transcription-3/STAT3 and STAT5. In mast cells, induces the rapid tyrosine phosphorylation of STAT6 and thereby controls mast cell survival and release of cytokines such as IL4. This chain is Interleukin-15 (IL15), found in Bubalus bubalis (Domestic water buffalo).